A 192-amino-acid polypeptide reads, in one-letter code: 7-methyl-GTP pyrophosphatase (192 aa).

The Proton acceptor role is filled by D69.

The protein belongs to the Maf family. YceF subfamily. The cofactor is a divalent metal cation.

It localises to the cytoplasm. It carries out the reaction N(7)-methyl-GTP + H2O = N(7)-methyl-GMP + diphosphate + H(+). Functionally, nucleoside triphosphate pyrophosphatase that hydrolyzes 7-methyl-GTP (m(7)GTP). May have a dual role in cell division arrest and in preventing the incorporation of modified nucleotides into cellular nucleic acids. In Pseudomonas syringae pv. tomato (strain ATCC BAA-871 / DC3000), this protein is 7-methyl-GTP pyrophosphatase (maf-1).